Here is a 195-residue protein sequence, read N- to C-terminus: Pyruvoyl-dependent arginine decarboxylase AaxB (195 aa).

Residue serine 53 is modified to Pyruvic acid (Ser).

This sequence belongs to the pyruvoyl-dependent arginine decarboxylase family. As to quaternary structure, trimer of an alpha-beta dimer. Pyruvate serves as cofactor.

It is found in the cytoplasm. It carries out the reaction L-arginine + H(+) = agmatine + CO2. Its activity is regulated as follows. Inhibited by argininamide. Functionally, part of the AaxABC system, catalyzes the decarboxylation of L-arginine. The arginine uptake by the bacterium in the macrophage may be a virulence factor against the host innate immune response. This is Pyruvoyl-dependent arginine decarboxylase AaxB (aaxB) from Chlamydia pneumoniae (Chlamydophila pneumoniae).